Reading from the N-terminus, the 398-residue chain is Na(+)/H(+) antiporter NhaA (398 aa).

A run of 11 helical transmembrane segments spans residues Ala14–Val34, Leu60–Val80, Met96–Phe116, Val125–Leu145, Val155–Phe175, Gln179–Asn199, Ile214–Val234, Phe263–Leu283, Leu292–Leu312, Ile330–Leu350, and Tyr362–Leu382.

Belongs to the NhaA Na(+)/H(+) (TC 2.A.33) antiporter family.

The protein resides in the cell inner membrane. It carries out the reaction Na(+)(in) + 2 H(+)(out) = Na(+)(out) + 2 H(+)(in). Its function is as follows. Na(+)/H(+) antiporter that extrudes sodium in exchange for external protons. The polypeptide is Na(+)/H(+) antiporter NhaA (Pectobacterium carotovorum subsp. carotovorum (strain PC1)).